Here is a 384-residue protein sequence, read N- to C-terminus: tRNA-specific 2-thiouridylase MnmA (384 aa).

The tract at residues 1–26 is disordered; it reads MDEGIRASGGIRACQTGKQKQGRKRP. ATP-binding positions include 36 to 43 and M62; that span reads GMSGGVDS. The interaction with target base in tRNA stretch occupies residues 122–124; it reads NPD. Residue C127 is the Nucleophile of the active site. C127 and C223 form a disulfide bridge. G151 contributes to the ATP binding site. The interval 173–175 is interaction with tRNA; that stretch reads KDQ. The active-site Cysteine persulfide intermediate is the C223. The interaction with tRNA stretch occupies residues 334–335; sequence RY.

Belongs to the MnmA/TRMU family.

It is found in the cytoplasm. The catalysed reaction is S-sulfanyl-L-cysteinyl-[protein] + uridine(34) in tRNA + AH2 + ATP = 2-thiouridine(34) in tRNA + L-cysteinyl-[protein] + A + AMP + diphosphate + H(+). In terms of biological role, catalyzes the 2-thiolation of uridine at the wobble position (U34) of tRNA, leading to the formation of s(2)U34. The chain is tRNA-specific 2-thiouridylase MnmA from Chromobacterium violaceum (strain ATCC 12472 / DSM 30191 / JCM 1249 / CCUG 213 / NBRC 12614 / NCIMB 9131 / NCTC 9757 / MK).